The primary structure comprises 332 residues: UPF0194 membrane protein YbhG (332 aa).

An N-terminal signal peptide occupies residues 1–16 (MMKKPVVIGLAVVVLA). Residues 107-209 (NEEIAQAAAA…LNLQDSTLIA (103 aa)) adopt a coiled-coil conformation.

It belongs to the UPF0194 family.

It localises to the periplasm. This is UPF0194 membrane protein YbhG from Escherichia coli (strain K12 / MC4100 / BW2952).